The chain runs to 874 residues: Valine--tRNA ligase (874 aa).

The 'HIGH' region motif lies at 46-56 (PNVTGHLHIGH). The short motif at 523–527 (KMSKS) is the 'KMSKS' region element. Lys526 serves as a coordination point for ATP. Residues 805-874 (DYVFQMKKAS…TLTDLKQKVK (70 aa)) are a coiled coil.

Belongs to the class-I aminoacyl-tRNA synthetase family. ValS type 1 subfamily. Monomer.

Its subcellular location is the cytoplasm. It carries out the reaction tRNA(Val) + L-valine + ATP = L-valyl-tRNA(Val) + AMP + diphosphate. Its function is as follows. Catalyzes the attachment of valine to tRNA(Val). As ValRS can inadvertently accommodate and process structurally similar amino acids such as threonine, to avoid such errors, it has a 'posttransfer' editing activity that hydrolyzes mischarged Thr-tRNA(Val) in a tRNA-dependent manner. This Ureaplasma parvum serovar 3 (strain ATCC 700970) protein is Valine--tRNA ligase.